A 1184-amino-acid chain; its full sequence is DNA polymerase III subunit alpha (1184 aa).

Belongs to the DNA polymerase type-C family. DnaE subfamily. In terms of assembly, the Pol III holoenzyme complex contains at least 10 different subunits organized into 3 functionally essential subassemblies: the Pol III core, the beta sliding clamp processivity factor and the clamp-loading complex. The Pol III core (subunits alpha, epsilon and theta) contains the polymerase and the 3'-5' exonuclease proofreading activities. The polymerase is tethered to the template via the dimeric beta sliding clamp processivity factor. The clamp loader (also called gamma complex) assembles the beta sliding clamp onto the primed template and plays a central role in the organization and communication at the replication fork. The clamp-loading complex contains delta, delta', psi and chi, and 3 copies of either or both of two different DnaX proteins, gamma and tau. The DNA replisome complex has a single clamp loader (3 tau and 1 each of delta, delta', psi and chi subunits) which binds 3 Pol III cores (1 core on the leading strand and 2 on the lagging strand) each with a beta sliding clamp dimer. Interacts with the beta-sliding clamp (DnaN). Co-immunoprecipitates with DarG in the presence and absence of darT.

It localises to the cytoplasm. It catalyses the reaction DNA(n) + a 2'-deoxyribonucleoside 5'-triphosphate = DNA(n+1) + diphosphate. In terms of biological role, DNA polymerase III is a complex, multichain enzyme responsible for most of the replicative synthesis in bacteria. Pol III also exhibits 3' to 5' exonuclease activity. The alpha chain is the DNA polymerase. This is DNA polymerase III subunit alpha (dnaE1) from Mycobacterium tuberculosis (strain ATCC 25618 / H37Rv).